The following is a 150-amino-acid chain: Deoxyuridine 5'-triphosphate nucleotidohydrolase (150 aa).

Residues 69-71 (RSG), asparagine 82, 86-88 (TID), and lysine 96 contribute to the substrate site.

It belongs to the dUTPase family. Mg(2+) is required as a cofactor.

The enzyme catalyses dUTP + H2O = dUMP + diphosphate + H(+). It functions in the pathway pyrimidine metabolism; dUMP biosynthesis; dUMP from dCTP (dUTP route): step 2/2. Functionally, this enzyme is involved in nucleotide metabolism: it produces dUMP, the immediate precursor of thymidine nucleotides and it decreases the intracellular concentration of dUTP so that uracil cannot be incorporated into DNA. The polypeptide is Deoxyuridine 5'-triphosphate nucleotidohydrolase (Aquifex aeolicus (strain VF5)).